Reading from the N-terminus, the 320-residue chain is Endolytic peptidoglycan transglycosylase RlpA (320 aa).

This sequence belongs to the RlpA family.

In terms of biological role, lytic transglycosylase with a strong preference for naked glycan strands that lack stem peptides. The chain is Endolytic peptidoglycan transglycosylase RlpA from Rickettsia typhi (strain ATCC VR-144 / Wilmington).